The chain runs to 369 residues: UPF0284 protein sll1500 (369 aa).

The protein belongs to the UPF0284 family.

This Synechocystis sp. (strain ATCC 27184 / PCC 6803 / Kazusa) protein is UPF0284 protein sll1500.